A 155-amino-acid polypeptide reads, in one-letter code: Protein SprT-like (155 aa).

The 139-residue stretch at 7–145 folds into the SprT-like domain; the sequence is QRHMEEVSLQ…GSCGGKLIQT (139 aa). Zn(2+) is bound at residue His67. The active site involves Glu68. A Zn(2+)-binding site is contributed by His71.

The protein belongs to the SprT family. Zn(2+) is required as a cofactor.

The protein resides in the cytoplasm. The polypeptide is Protein SprT-like (Listeria monocytogenes serovar 1/2a (strain ATCC BAA-679 / EGD-e)).